A 570-amino-acid polypeptide reads, in one-letter code: Sulfite reductase [NADPH] hemoprotein beta-component (570 aa).

4 residues coordinate [4Fe-4S] cluster: Cys-434, Cys-440, Cys-479, and Cys-483. Cys-483 contributes to the siroheme binding site.

Belongs to the nitrite and sulfite reductase 4Fe-4S domain family. As to quaternary structure, alpha(8)-beta(8). The alpha component is a flavoprotein, the beta component is a hemoprotein. The cofactor is siroheme. Requires [4Fe-4S] cluster as cofactor.

It catalyses the reaction hydrogen sulfide + 3 NADP(+) + 3 H2O = sulfite + 3 NADPH + 4 H(+). The protein operates within sulfur metabolism; hydrogen sulfide biosynthesis; hydrogen sulfide from sulfite (NADPH route): step 1/1. Component of the sulfite reductase complex that catalyzes the 6-electron reduction of sulfite to sulfide. This is one of several activities required for the biosynthesis of L-cysteine from sulfate. In Shigella flexneri, this protein is Sulfite reductase [NADPH] hemoprotein beta-component.